Here is a 314-residue protein sequence, read N- to C-terminus: Ribosomal RNA small subunit methyltransferase H (314 aa).

Residues 35–37 (GGH), Asp-55, Phe-79, Asp-101, and Gln-108 contribute to the S-adenosyl-L-methionine site. Residues 276-296 (QGGQTLKPVGKKLMPSEAEVA) are disordered.

Belongs to the methyltransferase superfamily. RsmH family.

The protein resides in the cytoplasm. It carries out the reaction cytidine(1402) in 16S rRNA + S-adenosyl-L-methionine = N(4)-methylcytidine(1402) in 16S rRNA + S-adenosyl-L-homocysteine + H(+). In terms of biological role, specifically methylates the N4 position of cytidine in position 1402 (C1402) of 16S rRNA. This is Ribosomal RNA small subunit methyltransferase H from Pectobacterium atrosepticum (strain SCRI 1043 / ATCC BAA-672) (Erwinia carotovora subsp. atroseptica).